Here is a 74-residue protein sequence, read N- to C-terminus: UPF0346 protein SE_1114 (74 aa).

This sequence belongs to the UPF0346 family.

The polypeptide is UPF0346 protein SE_1114 (Staphylococcus epidermidis (strain ATCC 12228 / FDA PCI 1200)).